The primary structure comprises 388 residues: Succinate--CoA ligase [ADP-forming] subunit beta (388 aa).

The ATP-grasp domain maps to 9–244; the sequence is KAIFRSMGVA…LEEEDPKEIE (236 aa). ATP-binding positions include Lys-46, 53 to 55, Glu-99, Cys-102, and Glu-107; that span reads GRG. Mg(2+) is bound by residues Asn-199 and Asp-213. Substrate contacts are provided by residues Asn-264 and 321 to 323; that span reads GIM.

Belongs to the succinate/malate CoA ligase beta subunit family. Heterotetramer of two alpha and two beta subunits. Requires Mg(2+) as cofactor.

The catalysed reaction is succinate + ATP + CoA = succinyl-CoA + ADP + phosphate. It carries out the reaction GTP + succinate + CoA = succinyl-CoA + GDP + phosphate. Its pathway is carbohydrate metabolism; tricarboxylic acid cycle; succinate from succinyl-CoA (ligase route): step 1/1. Succinyl-CoA synthetase functions in the citric acid cycle (TCA), coupling the hydrolysis of succinyl-CoA to the synthesis of either ATP or GTP and thus represents the only step of substrate-level phosphorylation in the TCA. The beta subunit provides nucleotide specificity of the enzyme and binds the substrate succinate, while the binding sites for coenzyme A and phosphate are found in the alpha subunit. In Staphylococcus saprophyticus subsp. saprophyticus (strain ATCC 15305 / DSM 20229 / NCIMB 8711 / NCTC 7292 / S-41), this protein is Succinate--CoA ligase [ADP-forming] subunit beta.